A 258-amino-acid chain; its full sequence is MRVAVFDCDGFHKKFWSPVVKFPTPLIEGKLIKRYKRFLSDIELPNGDVVVAHCPNTGSMKRCQQDGARVWLSKSDNPKRKLAYTWELVEVDAQYLACINTGYPNKLVGEAISNGVVKELAEYPEQKAEVKYGEKSRIDWLLTGNDGRKCYVEVKSVTLLEEDGLGYFPDAVTDRGRKHLYELAKMVEEGHRAVMFFCVSHTGINSVTPAAHIDKKYAQAFVEVVKKGVEVIAYQVAIDSQEMKVVRSVPVVMPTLLD.

Belongs to the SfsA family.

In Marinomonas sp. (strain MWYL1), this protein is Sugar fermentation stimulation protein homolog.